A 394-amino-acid polypeptide reads, in one-letter code: MCDNKKPTVKEIAELCLKKFESLPKTGKPTANQWTILAGIVEFNRNTEACQLVSLGCGTKCIGESKLCPNGLILNDSHAEVLARRGFLRFLYQELKQDRIFHWNSTLSTYDMDEHVEFHFLSTQTPCGDACILEEEQPAARAKRQRLDEDSEMVYTGAKLISDLSDDPMLQTPGALRTKPGRGERTLSMSCSDKIARWNVIGVQGALLDVLISKPIYFSSLNFCCDDAQLESLERAIFKRFDCRTFKHTRFQPQRPQINIDPGIRFEFSQRSDWQPSPNGLIWSQVPEELRPYEISVNGKRQGVTKKKMKTSQAALAISKYKLFLTFLELVKFNPKLSEMFDQQLSDPERIAYASCKDLARDYQFAWREIKEKYFLQWTKKPHELLDFNPMSNK.

An A to I editase domain is found at 54 to 388 (SLGCGTKCIG…TKKPHELLDF (335 aa)). H78 serves as a coordination point for Zn(2+). E80 functions as the Proton donor in the catalytic mechanism. Positions 84 and 85 each coordinate 1D-myo-inositol hexakisphosphate. Zn(2+) is bound by residues C127 and C191. 1D-myo-inositol hexakisphosphate contacts are provided by K194, R197, K320, K357, and K381.

Belongs to the ADAT1 family. 1D-myo-inositol hexakisphosphate serves as cofactor. Widely expressed in early embryos, and later concentrates in the central nervous system.

It catalyses the reaction adenosine(37) in tRNA(Ala) + H2O + H(+) = inosine(37) in tRNA(Ala) + NH4(+). Specifically deaminates adenosine-37 to inosine in tRNA-Ala. The polypeptide is tRNA-specific adenosine deaminase 1 (Drosophila melanogaster (Fruit fly)).